A 225-amino-acid polypeptide reads, in one-letter code: Uracil-DNA glycosylase (225 aa).

Aspartate 68 functions as the Proton acceptor in the catalytic mechanism.

Belongs to the uracil-DNA glycosylase (UDG) superfamily. UNG family.

Its subcellular location is the cytoplasm. It catalyses the reaction Hydrolyzes single-stranded DNA or mismatched double-stranded DNA and polynucleotides, releasing free uracil.. Its function is as follows. Excises uracil residues from the DNA which can arise as a result of misincorporation of dUMP residues by DNA polymerase or due to deamination of cytosine. This is Uracil-DNA glycosylase from Parafrankia sp. (strain EAN1pec).